A 504-amino-acid polypeptide reads, in one-letter code: ATP synthase subunit alpha (504 aa).

169–176 serves as a coordination point for ATP; sequence GDRQTGKT.

Belongs to the ATPase alpha/beta chains family. F-type ATPases have 2 components, CF(1) - the catalytic core - and CF(0) - the membrane proton channel. CF(1) has five subunits: alpha(3), beta(3), gamma(1), delta(1), epsilon(1). CF(0) has three main subunits: a(1), b(2) and c(9-12). The alpha and beta chains form an alternating ring which encloses part of the gamma chain. CF(1) is attached to CF(0) by a central stalk formed by the gamma and epsilon chains, while a peripheral stalk is formed by the delta and b chains.

It localises to the cell membrane. The catalysed reaction is ATP + H2O + 4 H(+)(in) = ADP + phosphate + 5 H(+)(out). Produces ATP from ADP in the presence of a proton gradient across the membrane. The alpha chain is a regulatory subunit. This chain is ATP synthase subunit alpha, found in Clostridium botulinum (strain Loch Maree / Type A3).